A 462-amino-acid polypeptide reads, in one-letter code: UDP-N-acetylmuramate--L-alanine ligase (462 aa).

Residue 116 to 122 (GAHGKTT) coordinates ATP.

The protein belongs to the MurCDEF family.

It localises to the cytoplasm. It carries out the reaction UDP-N-acetyl-alpha-D-muramate + L-alanine + ATP = UDP-N-acetyl-alpha-D-muramoyl-L-alanine + ADP + phosphate + H(+). It functions in the pathway cell wall biogenesis; peptidoglycan biosynthesis. Cell wall formation. The sequence is that of UDP-N-acetylmuramate--L-alanine ligase from Desulforamulus reducens (strain ATCC BAA-1160 / DSM 100696 / MI-1) (Desulfotomaculum reducens).